A 152-amino-acid polypeptide reads, in one-letter code: Small ribosomal subunit protein uS19u (152 aa).

This sequence belongs to the universal ribosomal protein uS19 family.

It is found in the cytoplasm. The protein is Small ribosomal subunit protein uS19u (RPS15A) of Arabidopsis thaliana (Mouse-ear cress).